We begin with the raw amino-acid sequence, 815 residues long: Probable beta-glucosidase G (815 aa).

Positions M1–G20 are cleaved as a signal peptide. Residues N40, N58, N229, and N276 are each glycosylated (N-linked (GlcNAc...) asparagine). Residue D304 is part of the active site. 9 N-linked (GlcNAc...) asparagine glycosylation sites follow: N343, N350, N402, N507, N563, N584, N623, N662, and N715.

This sequence belongs to the glycosyl hydrolase 3 family.

It is found in the secreted. It carries out the reaction Hydrolysis of terminal, non-reducing beta-D-glucosyl residues with release of beta-D-glucose.. It participates in glycan metabolism; cellulose degradation. Beta-glucosidases are one of a number of cellulolytic enzymes involved in the degradation of cellulosic biomass. Catalyzes the last step releasing glucose from the inhibitory cellobiose. The sequence is that of Probable beta-glucosidase G (bglG) from Aspergillus flavus (strain ATCC 200026 / FGSC A1120 / IAM 13836 / NRRL 3357 / JCM 12722 / SRRC 167).